The primary structure comprises 325 residues: D site-binding protein (325 aa).

3 disordered regions span residues 1-100 (MARP…PGLL), 124-198 (LEHG…DPDT), and 212-255 (LALS…EQKD). The segment covering 17–28 (GPTGAPPGGGAL) has biased composition (gly residues). Composition is skewed to low complexity over residues 29 to 38 (LGLRSLLQGT) and 71 to 80 (AGPADASAGA). Ser86 is modified (phosphoserine). Residues 88–100 (RGRPGAAPGPGLL) are compositionally biased toward low complexity. Pro residues predominate over residues 129-153 (PPSPPPPGGPSPAPSPVRTPAPSPR). Low complexity predominate over residues 166–176 (PGHAPARAALG). Residues 221–236 (ETFDPRRHRFSEEELK) show a composition bias toward basic and acidic residues. The bZIP domain occupies 255 to 318 (DEKYWSRRYK…SHYRAVLSRY (64 aa)). The interval 257–279 (KYWSRRYKNNEAAKRSRDARRLK) is basic motif. A leucine-zipper region spans residues 283–297 (ISVRAAFLEKENALL).

This sequence belongs to the bZIP family. PAR subfamily. As to quaternary structure, binds DNA as a homodimer or a heterodimer. Can form a heterodimer with TEF.

The protein localises to the nucleus. In terms of biological role, this transcriptional activator recognizes and binds to the sequence 5'-RTTAYGTAAY-3' found in the promoter of genes such as albumin, CYP2A4 and CYP2A5. It is not essential for circadian rhythm generation, but modulates important clock output genes. May be a direct target for regulation by the circadian pacemaker component clock. May affect circadian period and sleep regulation. In Bos taurus (Bovine), this protein is D site-binding protein (DBP).